The following is a 391-amino-acid chain: Somatostatin receptor type 1 (391 aa).

Residues 1–50 (MFPNGTASSPSSSPSPSPGSCGEGACSRGPGSGAADGMEEPGRNASQNGT) are disordered. The Extracellular segment spans residues 1–56 (MFPNGTASSPSSSPSPSPGSCGEGACSRGPGSGAADGMEEPGRNASQNGTLSEGQG). A glycan (N-linked (GlcNAc...) asparagine) is linked at Asn-4. The segment covering 8–20 (SSPSSSPSPSPGS) has biased composition (low complexity). Residues Asn-44 and Asn-48 are each glycosylated (N-linked (GlcNAc...) asparagine). Residues 57–84 (SAILISFIYSVVCLVGLCGNSMVIYVIL) traverse the membrane as a helical segment. The Cytoplasmic segment spans residues 85 to 94 (RYAKMKTATN). Residues 95 to 120 (IYILNLAIADELLMLSVPFLVTSTLL) traverse the membrane as a helical segment. Residues 121 to 131 (RHWPFGALLCR) lie on the Extracellular side of the membrane. Cys-130 and Cys-208 are joined by a disulfide. Residues 132-153 (LVLSVDAVNMFTSIYCLTVLSV) traverse the membrane as a helical segment. At 154–175 (DRYVAVVHPIKAARYRRPTVAK) the chain is on the cytoplasmic side. A helical transmembrane segment spans residues 176-196 (VVNLGVWVLSLLVILPIVVFS). Residues 197 to 219 (RTAANSDGTVACNMLMPEPAQRW) lie on the Extracellular side of the membrane. Residues 220–244 (LVGFVLYTFLMGFLLPVGAICLCYV) traverse the membrane as a helical segment. Residues 245-270 (LIIAKMRMVALKAGWQQRKRSERKIT) lie on the Cytoplasmic side of the membrane. The chain crosses the membrane as a helical span at residues 271 to 296 (LMVMMVVMVFVICWMPFYVVQLVNVF). At 297-303 (AEQDDAT) the chain is on the extracellular side. The chain crosses the membrane as a helical span at residues 304–327 (VSQLSVILGYANSCANPILYGFLS). Topologically, residues 328 to 391 (DNFKRSFQRI…GTCASRISTL (64 aa)) are cytoplasmic. The S-palmitoyl cysteine moiety is linked to residue Cys-339.

This sequence belongs to the G-protein coupled receptor 1 family. In terms of tissue distribution, jejunum and stomach.

It is found in the cell membrane. In terms of biological role, receptor for somatostatin with higher affinity for somatostatin-14 than -28. This receptor is coupled via pertussis toxin sensitive G proteins to inhibition of adenylyl cyclase. In addition it stimulates phosphotyrosine phosphatase and Na(+)/H(+) exchanger via pertussis toxin insensitive G proteins. The protein is Somatostatin receptor type 1 (Sstr1) of Mus musculus (Mouse).